Reading from the N-terminus, the 390-residue chain is Anhydro-N-acetylmuramic acid kinase (390 aa).

9-16 (GTSLDGID) lines the ATP pocket.

This sequence belongs to the anhydro-N-acetylmuramic acid kinase family.

It carries out the reaction 1,6-anhydro-N-acetyl-beta-muramate + ATP + H2O = N-acetyl-D-muramate 6-phosphate + ADP + H(+). Its pathway is amino-sugar metabolism; 1,6-anhydro-N-acetylmuramate degradation. The protein operates within cell wall biogenesis; peptidoglycan recycling. Catalyzes the specific phosphorylation of 1,6-anhydro-N-acetylmuramic acid (anhMurNAc) with the simultaneous cleavage of the 1,6-anhydro ring, generating MurNAc-6-P. Is required for the utilization of anhMurNAc either imported from the medium or derived from its own cell wall murein, and thus plays a role in cell wall recycling. This Bacillus cereus (strain ATCC 14579 / DSM 31 / CCUG 7414 / JCM 2152 / NBRC 15305 / NCIMB 9373 / NCTC 2599 / NRRL B-3711) protein is Anhydro-N-acetylmuramic acid kinase.